An 84-amino-acid chain; its full sequence is U4-theraphotoxin-Hhn1aa (84 aa).

Positions 1-22 (MKVTLIAILTCAAVLVLHTTAA) are cleaved as a signal peptide. Positions 23 to 47 (EELEESQLMEVGMPDTELAAVDEER) are excised as a propeptide. Disulfide bonds link cysteine 51–cysteine 65 and cysteine 55–cysteine 76.

Belongs to the neurotoxin 12 (Hwtx-2) family. 02 (Hwtx-2) subfamily. Expressed by the venom gland.

Its subcellular location is the secreted. In terms of biological role, postsynaptic neurotoxin. This Cyriopagopus hainanus (Chinese bird spider) protein is U4-theraphotoxin-Hhn1aa.